Consider the following 419-residue polypeptide: Gustatory receptor for bitter taste 93a (419 aa).

Over 1–55 (MFSSSSAMTGKRAESWSRLLLLWLYRCARGLLVLSSSLDRDKLQLKATKQGSRNR) the chain is Cytoplasmic. The helical transmembrane segment at 56-76 (FLHILWRCIVVMIYAGLWPML) threads the bilayer. At 77-90 (TSAVIGKRLESYAD) the chain is on the extracellular side. A helical transmembrane segment spans residues 91–111 (VLALAQSMSVSILAVISFVIQ). The Cytoplasmic segment spans residues 112-145 (ARGENQFREVLNRYLALYQRICLTTRLRHLFPTK). Residues 146 to 166 (FVVFFLLKLFFTLCGCFHEII) form a helical membrane-spanning segment. The Extracellular segment spans residues 167–184 (PLFENSHFDDISQMVGTG). Residues 185-205 (FGIYMWLGTLCVLDACFLGFL) traverse the membrane as a helical segment. The Cytoplasmic segment spans residues 206–277 (VSGILYEHMA…NSFRRILQWQ (72 aa)). Residues 278–298 (ILFYIYLNFINICLMLYQYIL) traverse the membrane as a helical segment. At 299 to 305 (HFLNDDE) the chain is on the extracellular side. A helical transmembrane segment spans residues 306 to 326 (VVFVSIVMAFVKLANLVLLMM). Over 327–383 (CADYTVRQSEVPKKLPLDIVCSDMDERWDKSVETFLGQLQTQRLEIKVLGFFHLNNE) the chain is Cytoplasmic. A helical transmembrane segment spans residues 384 to 404 (FILLILSAIISYLFILIQFGI). The Extracellular segment spans residues 405–419 (TGGFEASEDIKNRFD).

It belongs to the insect chemoreceptor superfamily. Gustatory receptor (GR) family. Gr93a subfamily. As to expression, in larvae, is expressed in neurons of the dorsal pharyngeal sense organs.

The protein localises to the cell membrane. In terms of biological role, gustatory receptor required for response to the bitter in taste neurons. Gr93a cells respond to bitter compounds such as caffeine. Flies avoid bitter substances, suggesting that Gr93a neuron activity is sufficient to mediate avoidance behavior. The polypeptide is Gustatory receptor for bitter taste 93a (Gr93a) (Drosophila melanogaster (Fruit fly)).